The primary structure comprises 408 residues: WD repeat-containing protein JIP5 (408 aa).

WD repeat units follow at residues 5-44, 50-86, 87-130, 133-172, 177-216, and 221-267; these read PVGS…DSHN, PSKR…TTDI, DARS…SVKT, QHFD…PKVV, DQED…GDCV, and GHPL…FLGV. The tract at residues 311 to 408 is disordered; it reads VDSDEEEDDE…VIDKDFFDGL (98 aa). 2 stretches are compositionally biased toward acidic residues: residues 313-339 and 356-366; these read SDEE…EDEE and DESDDEDEEME. The segment covering 396–408 has biased composition (basic and acidic residues); it reads KETVIDKDFFDGL.

The protein belongs to the WD repeat WDR55 family.

It localises to the nucleus. The protein resides in the nucleolus. The chain is WD repeat-containing protein JIP5 (JIP5) from Coprinopsis cinerea (strain Okayama-7 / 130 / ATCC MYA-4618 / FGSC 9003) (Inky cap fungus).